Consider the following 187-residue polypeptide: Ribosome-recycling factor (187 aa).

It belongs to the RRF family.

The protein resides in the cytoplasm. Functionally, responsible for the release of ribosomes from messenger RNA at the termination of protein biosynthesis. May increase the efficiency of translation by recycling ribosomes from one round of translation to another. This Methylobacterium radiotolerans (strain ATCC 27329 / DSM 1819 / JCM 2831 / NBRC 15690 / NCIMB 10815 / 0-1) protein is Ribosome-recycling factor.